The sequence spans 502 residues: Keratin, type II microfibrillar, component 5 (502 aa).

Ser1 is modified (blocked amino end (Ser)). Residues 1 to 122 (SCRSYRISPG…PNAQCVKHQE (122 aa)) are head. In terms of domain architecture, IF rod spans 122–433 (EKEQIKNLNS…RLLEGEEQRL (312 aa)). Residues 123 to 157 (KEQIKNLNSRFAAFIDKVRFLEQQNKLLETKWQFY) are coil 1A. Residues 158-167 (QNQRCCESNL) are linker 1. Positions 168 to 268 (EPLFNGYIET…YDEEIQILNA (101 aa)) are coil 1B. A Glycyl lysine isopeptide (Lys-Gly) (interchain with G-Cter in SUMO1) cross-link involves residue Lys228. Residues 269–285 (HISDTSVIVKMDNSRDL) form a linker 12 region. The segment at 286 to 429 (NMDCVVAEIK…ATYRRLLEGE (144 aa)) is coil 2. Positions 430 to 502 (EQRLCEGVGS…CGSSRSVRFA (73 aa)) are tail.

This sequence belongs to the intermediate filament family. In terms of tissue distribution, hard keratin wool.

Its function is as follows. Wool microfibrillar keratin. The sequence is that of Keratin, type II microfibrillar, component 5 from Ovis aries (Sheep).